The primary structure comprises 198 residues: Recombination protein RecR (198 aa).

Residues 57 to 72 (CSICGRLTDDDPCSIC) form a C4-type zinc finger. Residues 80-175 (TTILVLEDSR…KVTRLARGLA (96 aa)) form the Toprim domain.

The protein belongs to the RecR family.

May play a role in DNA repair. It seems to be involved in an RecBC-independent recombinational process of DNA repair. It may act with RecF and RecO. This chain is Recombination protein RecR, found in Streptococcus pneumoniae (strain 70585).